A 1156-amino-acid chain; its full sequence is Pesticidal crystal protein Cry9Aa (1156 aa).

Positions 1 to 23 (MNQNKHGIIGASNCGCASDDVAK) are cleaved as a propeptide — removed in mature form.

This sequence belongs to the delta endotoxin family.

Its function is as follows. Promotes colloidosmotic lysis by binding to the midgut epithelial cells of insects. This protein is toxic to Galleria mellonella. The chain is Pesticidal crystal protein Cry9Aa (cry9Aa) from Bacillus thuringiensis subsp. galleriae.